The chain runs to 479 residues: Serine carboxypeptidase-like 29 (479 aa).

The N-terminal stretch at M1–A28 is a signal peptide. N-linked (GlcNAc...) asparagine glycosylation is found at N47 and N144. Disulfide bonds link C93/C349, C254/C266, and C290/C317. S186 is a catalytic residue. Residue N293 is glycosylated (N-linked (GlcNAc...) asparagine). Active-site residues include D386 and H438.

Belongs to the peptidase S10 family. Expressed in seedlings, roots, leaves and flowers.

The protein resides in the secreted. Its function is as follows. Probable carboxypeptidase. The chain is Serine carboxypeptidase-like 29 (SCPL29) from Arabidopsis thaliana (Mouse-ear cress).